A 375-amino-acid chain; its full sequence is Serpin B5 (375 aa).

N-linked (GlcNAc...) asparagine glycosylation is found at N99, N133, N155, N188, and N361.

The protein belongs to the serpin family. Ov-serpin subfamily. In terms of assembly, interacts with IRF6.

It is found in the secreted. Its subcellular location is the extracellular space. In terms of biological role, tumor suppressor. It blocks the growth, invasion, and metastatic properties of mammary tumors. As it does not undergo the S (stressed) to R (relaxed) conformational transition characteristic of active serpins, it exhibits no serine protease inhibitory activity. This is Serpin B5 (SERPINB5) from Plecturocebus moloch (Dusky titi monkey).